A 183-amino-acid polypeptide reads, in one-letter code: Inner membrane-spanning protein YciB (183 aa).

The next 5 membrane-spanning stretches (helical) occupy residues 22-42, 50-70, 72-92, 118-138, and 148-168; these read IYAA…ITYL, MHLA…FFHD, AFIK…LIAS, VTWY…YIAF, and FKVF…VVYL.

The protein belongs to the YciB family.

It is found in the cell inner membrane. In terms of biological role, plays a role in cell envelope biogenesis, maintenance of cell envelope integrity and membrane homeostasis. This chain is Inner membrane-spanning protein YciB, found in Shewanella frigidimarina (strain NCIMB 400).